The sequence spans 87 residues: X protein (87 aa).

The interval 5–16 (LRLTLLELVRRL) is nuclear export signal. Residues 18–87 (GNATIESGRL…PANRKGAAVE (70 aa)) form a disordered region. The segment covering 36 to 48 (DTTTGTTGVTKTT) has biased composition (low complexity).

In terms of assembly, interacts with P and N proteins. These interactions presumably promote nuclear targeting of the X protein in infected cells. Interacts with host MAVS; this interaction inhibits MAVS-induced apoptosis. Post-translationally, phosphorylated.

It is found in the host nucleus. The protein localises to the host mitochondrion. Plays an essential role in the inhibition of host apoptosis. Mediates host mitochondria-mediated apoptosis through interaction with the mitochondrial antiviral signaling protein/MAVS and thereby promotes viral persistence in host central nervous system. Within the host nucleus, regulates viral RNA synthesis and polymerase complex assembly. This is X protein (P/X) from Borna disease virus 1 (BoDV-1).